We begin with the raw amino-acid sequence, 527 residues long: MSSMNFNPFQNWFEKPPNPVPSINFVSLADSFFPKSQSPNFASIGLPKFSKKSPKPETAGTDEPGPYKQIAEQFLWECENIPDYRHTPEVDKLLNEDPVFEKKENPSTEEIEAEQKWWESFRASPVVQFMTRAEEIADDMNKMELEDNDTPYRKEDKDYWRAIPHVPGFDGRPMPRKAIKSKEESDDKFWDFMKQFLFGLWGFRQRPYPPGRPIDVAQAIGYKRLEKRYYDFIMKTGGWWYKDRLGRSRGPCEIITLKTAYGAGIIDRDTFIWGEDMDEWAPIHMVYGLEPAIATWEVRLGAAATAFLHKLQKGIPPWVPLKGREPKTYKQLQKEAIESKKRDMAVLEANGGVWPGVRTPSHALFLWASGSELTTVLESDHMPNKFIPKQLRLELAKVIPGLRPWEVISIEQAMDQISYGGEWYREPLGTYTTGPPYIREWNRSVMRLFRIFYNLSVRVGQKLERTVPGFDTIMDKVQKDYDKRIARRMKRREEELREEDLKHYSGRTDEDEEEEEEEDDDSNSKKD.

The transit peptide at 1 to 48 directs the protein to the chloroplast; sequence MSSMNFNPFQNWFEKPPNPVPSINFVSLADSFFPKSQSPNFASIGLPK. The segment at 43-67 is disordered; it reads SIGLPKFSKKSPKPETAGTDEPGPY. Deamidated asparagine is present on N350. The segment covering 491-508 has biased composition (basic and acidic residues); sequence RREEELREEDLKHYSGRT. The disordered stretch occupies residues 491 to 527; it reads RREEELREEDLKHYSGRTDEDEEEEEEEDDDSNSKKD. Residues 509–521 show a composition bias toward acidic residues; the sequence is DEDEEEEEEEDDD.

As to quaternary structure, part of the Tic complex. Component of the 1-MD complex, composed of TIC20-I, TIC214, TIC100 and TIC56. Interacts with the translocating preproteins. Hydrolysis of ATP is essential for the formation of this complex. The 1-MD complex interacts with TIC21.

It localises to the plastid. Its subcellular location is the chloroplast inner membrane. Its function is as follows. Involved in protein precursor import into chloroplasts. May be part of an intermediate translocation complex acting as a protein-conducting channel at the inner envelope. The chain is Protein TIC 56, chloroplastic from Arabidopsis thaliana (Mouse-ear cress).